Reading from the N-terminus, the 455-residue chain is Bifunctional protein GlmU (455 aa).

A pyrophosphorylase region spans residues 1–229; that stretch reads MSKKVMSVVI…LNEIEGINDG (229 aa). UDP-N-acetyl-alpha-D-glucosamine is bound by residues 11–14, Lys-25, Gln-76, 81–82, 103–105, Gly-140, Glu-154, Asn-169, and Asn-227; these read LAAG, GT, and YGD. Asp-105 is a Mg(2+) binding site. Mg(2+) is bound at residue Asn-227. The linker stretch occupies residues 230–250; the sequence is LQLARLERLFQKQQAEKLLLS. Positions 251 to 455 are N-acetyltransferase; the sequence is GVRILDPARF…IQGWKRPKKT (205 aa). UDP-N-acetyl-alpha-D-glucosamine is bound by residues Arg-333 and Lys-351. His-363 acts as the Proton acceptor in catalysis. Tyr-366 and Asn-377 together coordinate UDP-N-acetyl-alpha-D-glucosamine. Acetyl-CoA is bound by residues Ala-380, 386–387, Ser-405, Ala-423, and Arg-440; that span reads NY.

It in the N-terminal section; belongs to the N-acetylglucosamine-1-phosphate uridyltransferase family. The protein in the C-terminal section; belongs to the transferase hexapeptide repeat family. In terms of assembly, homotrimer. It depends on Mg(2+) as a cofactor.

Its subcellular location is the cytoplasm. It carries out the reaction alpha-D-glucosamine 1-phosphate + acetyl-CoA = N-acetyl-alpha-D-glucosamine 1-phosphate + CoA + H(+). It catalyses the reaction N-acetyl-alpha-D-glucosamine 1-phosphate + UTP + H(+) = UDP-N-acetyl-alpha-D-glucosamine + diphosphate. Its pathway is nucleotide-sugar biosynthesis; UDP-N-acetyl-alpha-D-glucosamine biosynthesis; N-acetyl-alpha-D-glucosamine 1-phosphate from alpha-D-glucosamine 6-phosphate (route II): step 2/2. The protein operates within nucleotide-sugar biosynthesis; UDP-N-acetyl-alpha-D-glucosamine biosynthesis; UDP-N-acetyl-alpha-D-glucosamine from N-acetyl-alpha-D-glucosamine 1-phosphate: step 1/1. It participates in bacterial outer membrane biogenesis; LPS lipid A biosynthesis. Its function is as follows. Catalyzes the last two sequential reactions in the de novo biosynthetic pathway for UDP-N-acetylglucosamine (UDP-GlcNAc). The C-terminal domain catalyzes the transfer of acetyl group from acetyl coenzyme A to glucosamine-1-phosphate (GlcN-1-P) to produce N-acetylglucosamine-1-phosphate (GlcNAc-1-P), which is converted into UDP-GlcNAc by the transfer of uridine 5-monophosphate (from uridine 5-triphosphate), a reaction catalyzed by the N-terminal domain. This chain is Bifunctional protein GlmU, found in Hamiltonella defensa subsp. Acyrthosiphon pisum (strain 5AT).